Here is a 351-residue protein sequence, read N- to C-terminus: Probable aldo-keto reductase 2 (351 aa).

Y67 serves as the catalytic Proton donor. Residue H134 coordinates substrate. An NADP(+)-binding site is contributed by 213-223 (SPLGRGFFSAG). The disordered stretch occupies residues 317–351 (YASTDDVRGDRYPQAMANTTWQNSETPPLSSWKAQ). The span at 332–351 (MANTTWQNSETPPLSSWKAQ) shows a compositional bias: polar residues.

Belongs to the aldo/keto reductase family.

This chain is Probable aldo-keto reductase 2, found in Oryza sativa subsp. indica (Rice).